The primary structure comprises 457 residues: Glutamate--tRNA ligase 2 (457 aa).

Positions 9–19 match the 'HIGH' region motif; sequence PSPTGRIHIGN. The short motif at 250–254 is the 'KMSKS' region element; it reads GLSKR. K253 serves as a coordination point for ATP.

The protein belongs to the class-I aminoacyl-tRNA synthetase family. Glutamate--tRNA ligase type 1 subfamily. As to quaternary structure, monomer.

It is found in the cytoplasm. The enzyme catalyses tRNA(Glu) + L-glutamate + ATP = L-glutamyl-tRNA(Glu) + AMP + diphosphate. Its function is as follows. Catalyzes the attachment of glutamate to tRNA(Glu) in a two-step reaction: glutamate is first activated by ATP to form Glu-AMP and then transferred to the acceptor end of tRNA(Glu). The chain is Glutamate--tRNA ligase 2 from Mesorhizobium japonicum (strain LMG 29417 / CECT 9101 / MAFF 303099) (Mesorhizobium loti (strain MAFF 303099)).